A 149-amino-acid chain; its full sequence is Large ribosomal subunit protein uL15 (149 aa).

Residues 14 to 63 (ASRKRVGRGSGSGLGCTSGKGNKGQNARAGGGVRPGFEGGQMPLQRRLPK) form a disordered region. Composition is skewed to gly residues over residues 21 to 35 (RGSGSGLGCTSGKGN) and 42 to 52 (AGGGVRPGFEG).

The protein belongs to the universal ribosomal protein uL15 family. As to quaternary structure, part of the 50S ribosomal subunit.

Binds to the 23S rRNA. The chain is Large ribosomal subunit protein uL15 from Nitratidesulfovibrio vulgaris (strain DSM 19637 / Miyazaki F) (Desulfovibrio vulgaris).